The primary structure comprises 488 residues: Putative sugar transporter ERD6-like 13 (488 aa).

Helical transmembrane passes span 51-71 (LILLFTTFTALCGTFSYGTAA), 89-109 (LAEFSFFGAVLTIGGLVGAAM), 116-138 (VFGRRGALGVSNSFCMAGWLMIA), 151-171 (LFLGVAAGVASYVVPVYIVEI), 182-202 (AINSLVMCASVAVTYLLGSVI), 207-227 (LALISTVPCVFEFVGLFFIPE), 291-311 (VGIGLLVLQQLGGLSGYTFYL), 324-344 (VGVMMASVVQSVTSVLGIVIV), 353-373 (LTVATIMMCLGSLITGLSFLF), 390-410 (GVLVFLTSITIGIGGIPWVMI), 423-445 (GTLCNLTSWSSNWFVSYTFNFLF), and 451-471 (GVFFIYTMISGVGILFVMKMV).

The protein belongs to the major facilitator superfamily. Sugar transporter (TC 2.A.1.1) family.

It localises to the membrane. Sugar transporter. The polypeptide is Putative sugar transporter ERD6-like 13 (Arabidopsis thaliana (Mouse-ear cress)).